A 127-amino-acid polypeptide reads, in one-letter code: Major sperm protein 38 (127 aa).

A2 carries the post-translational modification N-acetylalanine. The MSP domain maps to 9–126 (DIQTQPGTKI…RRKNLPIEYN (118 aa)).

In terms of tissue distribution, sperm.

The protein resides in the cell projection. It is found in the pseudopodium. The protein localises to the cytoplasm. It localises to the cytoskeleton. Central component in molecular interactions underlying sperm crawling. Forms an extensive filament system that extends from sperm villipoda, along the leading edge of the pseudopod. The chain is Major sperm protein 38 (msp-38) from Caenorhabditis elegans.